Consider the following 297-residue polypeptide: MALSTNNNSSHVGADDFLELENILSSEYNEEGIFKTSKTVCIRTDKRIGVGFLTPNDMISRLVGFINRKAEDAGVRSVESFRQISDVVLIIVPQIALPAELSLKLVDSANILEAVNDQEVTVNSTGGPCVVVMNCAHSIPNEDRTHVNGSEVHRRLGIQYQVDCDNISGRVTTFSITALWREAFSFRPSFYKVSDPLVVPISVGFRKAVIAKSHADLQRSIGRGLIVTHHSSESSVTSESPIDLTVKKSTGLKIRDKSEDDNQRKHPVPLTSSNNKLKTLRVSTTPIVNGRSTSTSE.

The disordered stretch occupies residues 249–297 (STGLKIRDKSEDDNQRKHPVPLTSSNNKLKTLRVSTTPIVNGRSTSTSE). Residues 253-264 (KIRDKSEDDNQR) are compositionally biased toward basic and acidic residues. Residues 270 to 297 (LTSSNNKLKTLRVSTTPIVNGRSTSTSE) are compositionally biased toward polar residues.

It localises to the host cell junction. It is found in the host plasmodesma. Its function is as follows. Transports viral genome to neighboring plant cells directly through plasmosdesmata, without any budding. The movement protein allows efficient cell to cell propagation, by bypassing the host cell wall barrier. The sequence is that of Putative movement protein (MP) from Citrus sinensis (Sweet orange).